A 200-amino-acid polypeptide reads, in one-letter code: Putative 3-methyladenine DNA glycosylase (200 aa).

The protein belongs to the DNA glycosylase MPG family.

The chain is Putative 3-methyladenine DNA glycosylase from Rhodopseudomonas palustris (strain BisB18).